The chain runs to 1675 residues: MAQILPIRFQEHLQLQNLGINPANIGFSTLTMESDKFICIREKVGEQAQVVIIDMNDPSNPIRRPISADSAIMNPASKVIALKAGKTLQIFNIEMKSKMKAHTMTDDVTFWKWISLNTVALVTDNAVYHWSMEGESQPVKMFDRHSSLAGCQIINYRTDAKQKWLLLTGISAQQNRVVGAMQLYSVDRKVSQPIEGHAASFAQFKMEGNAEESTLFCFAVRGQAGGKLHIIEVGTPPTGNQPFPKKAVDVFFPPEAQNDFPVAMQISEKHDVVFLITKYGYIHLYDLETGTCIYMNRISGETIFVTAPHEATAGIIGVNRKGQVLSVCVEEENIIPYITNVLQNPDLALRMAVRNNLAGAEELFARKFNALFAQGNYSEAAKVAANAPKGILRTPDTIRRFQSVPAQPGQTSPLLQYFGILLDQGQLNKYESLELCRPVLQQGRKQLLEKWLKEDKLECSEELGDLVKSVDPTLALSVYLRANVPNKVIQCFAETGQVQKIVLYAKKVGYTPDWIFLLRNVMRISPDQGQQFAQMLVQDEEPLADITQIVDVFMEYNLIQQCTAFLLDALKNNRPSEGPLQTRLLEMNLMHAPQVADAILGNQMFTHYDRAHIAQLCEKAGLLQRALEHFTDLYDIKRAVVHTHLLNPEWLVNYFGSLSVEDSLECLRAMLSANIRQNLQICVQVASKYHEQLSTQSLIELFESFKSFEGLFYFLGSIVNFSQDPDVHFKYIQAACKTGQIKEVERICRESNCYDPERVKNFLKEAKLTDQLPLIIVCDRFDFVHDLVLYLYRNNLQKYIEIYVQKVNPSRLPVVIGGLLDVDCSEDVIKNLILVVRGQFSTDELVAEVEKRNRLKLLLPWLEARIHEGCEEPATHNALAKIYIDSNNNPERFLRENPYYDSRVVGKYCEKRDPHLACVAYERGQCDLELINVCNENSLFKSLSRYLVRRKDPELWGSVLLESNPYRRPLIDQVVQTALSETQDPEEVSVTVKAFMTADLPNELIELLEKIVLDNSVFSEHRNLQNLLILTAIKADRTRVMEYINRLDNYDAPDIANIAISNELFEEAFAIFRKFDVNTSAVQVLIEHIGNLDRAYEFAERCNEPAVWSQLAKAQLQKGMVKEAIDSYIKADDPSSYMEVVQAANASGNWEELVKYLQMARKKARESYVETELIFALAKTNRLAELEEFINGPNNAHIQQVGDRCYDEKMYDAAKLLYNNVSNFGRLASTLVHLGEYQAAVDGARKANSTRTWKEVCFACVDGKEFRLAQMCGLHIVVHADELEELINYYQDRGYFEELITMLEAALGLERAHMGMFTELAILYSKFKPQKMREHLELFWSRVNIPKVLRAAEQAHLWAELVFLYDKYEEYDNAIITMMNHPTDAWKEGQFKDIITKVANVELYYKAIQFYLEFKPLLLNDLLMVLSPRLDHTRAVNYFSKVKQLPLVKPYLRSVQNHNNKSVNESLNNLFITEEDYQALRTSIDAYDNFDNISLAQRLEKHELIEFRRIAAYLFKGNNRWKQSVELCKKDSLYKDAMQYASESKDTELAEELLQWFLQEEKRECFGACLFTCYDLLRPDVVLETAWRHNIMDFAMPYFIQVMKEYLTKVDKLDASESLRKEEEQATETQPIVYGQPQLMLTAGPSVAVPPQAPFGYGYTAPPYGQPQPGFGYSM.

A2 is modified (N-acetylalanine). Positions 2-479 (AQILPIRFQE…VDPTLALSVY (478 aa)) are globular terminal domain. WD40-like repeat stretches follow at residues 24-67 (NIGF…RPIS), 68-107 (ADSAIMNPASKVIALKAGKTLQIFNIEMKSKMKAHTMTDD), 108-149 (VTFW…SSLA), 150-195 (GCQI…QPIE), 196-257 (GHAA…PEAQ), 258-301 (NDFP…ISGE), and 302-330 (TIFVTAPHEATAGIIGVNRKGQVLSVCVE). A Phosphoserine modification is found at S67. The residue at position 105 (T105) is a Phosphothreonine. At Y184 the chain carries Phosphotyrosine. At T394 the chain carries Phosphothreonine. Residues 449–465 (EKWLKEDKLECSEELGD) are binding site for the uncoating ATPase, involved in lattice disassembly. The interval 480–523 (LRANVPNKVIQCFAETGQVQKIVLYAKKVGYTPDWIFLLRNVMR) is flexible linker. The segment at 524-634 (ISPDQGQQFA…RALEHFTDLY (111 aa)) is distal segment. The heavy chain arm stretch occupies residues 524-1675 (ISPDQGQQFA…QPQPGFGYSM (1152 aa)). 7 CHCR repeats span residues 537–683 (VQDE…QICV), 686–828 (ASKY…SEDV), 833–972 (ILVV…PLID), 979–1124 (LSET…VKEA), 1128–1269 (YIKA…FRLA), 1274–1420 (LHIV…LLLN), and 1423–1566 (LMVL…RECF). Residue Y634 is modified to Phosphotyrosine. The interval 639 to 1675 (AVVHTHLLNP…QPQPGFGYSM (1037 aa)) is proximal segment. Position 737 is an N6-succinyllysine (K737). At K856 the chain carries N6-acetyllysine. At Y899 the chain carries Phosphotyrosine. Phosphoserine is present on S1167. Y1206 is modified (phosphotyrosine). The segment at 1213 to 1522 (AAKLLYNNVS…YLFKGNNRWK (310 aa)) is involved in binding clathrin light chain. At S1229 the chain carries Phosphoserine. K1441 bears the N6-acetyllysine; alternate mark. K1441 carries the post-translational modification N6-succinyllysine; alternate. Phosphotyrosine occurs at positions 1477 and 1487. S1494 bears the Phosphoserine mark. K1501 carries the N6-acetyllysine modification. The trimerization stretch occupies residues 1550 to 1675 (AEELLQWFLQ…QPQPGFGYSM (126 aa)).

The protein belongs to the clathrin heavy chain family. As to quaternary structure, clathrin triskelions, composed of 3 heavy chains and 3 light chains, are the basic subunits of the clathrin coat. In the presence of light chains, hub assembly is influenced by both the pH and the concentration of calcium. Interacts with HIP1. Interacts with DENND1A, DENND1B and DENND1C. Interacts with ERBB2. Interacts with FKBP6. Interacts with OCRL. Interacts with CKAP5 and TACC3 forming the TACC3/ch-TOG/clathrin complex located at spindle inter-microtubules bridges; the complex implicates clathrin triskelions; TACC3 and CLTC are proposed to form a composite microtubule interaction surface. Plays a role in early autophagosome formation. Interacts with ATG16L1 (via N-terminus). Interacts with RFTN1; the interaction occurs in response to pathogens. Interacts with USP2 isoform 2. Interacts with TMEM106B (via N-terminus). Interacts with DNAJC6; this interaction produces a local change in heavy-chain contacts, creating a detectable global distortion of the clathrin coat and leads to the recruitment of HSPA8.

The protein localises to the cytoplasmic vesicle membrane. It is found in the membrane. Its subcellular location is the coated pit. The protein resides in the melanosome. It localises to the cytoplasm. The protein localises to the cytoskeleton. It is found in the spindle. Clathrin is the major protein of the polyhedral coat of coated pits and vesicles. Two different adapter protein complexes link the clathrin lattice either to the plasma membrane or to the trans-Golgi network. Acts as a component of the TACC3/ch-TOG/clathrin complex proposed to contribute to stabilization of kinetochore fibers of the mitotic spindle by acting as inter-microtubule bridge. The TACC3/ch-TOG/clathrin complex is required for the maintenance of kinetochore fiber tension. Plays a role in early autophagosome formation. Interaction with DNAJC6 mediates the recruitment of HSPA8 to the clathrin lattice and creates local destabilization of the lattice promoting uncoating. The sequence is that of Clathrin heavy chain 1 from Mus musculus (Mouse).